Here is a 211-residue protein sequence, read N- to C-terminus: Thiamine-phosphate synthase (211 aa).

4-amino-2-methyl-5-(diphosphooxymethyl)pyrimidine-binding positions include 38-42 and N70; that span reads QLREK. Residues D71 and D90 each coordinate Mg(2+). S109 serves as a coordination point for 4-amino-2-methyl-5-(diphosphooxymethyl)pyrimidine. 135–137 is a 2-[(2R,5Z)-2-carboxy-4-methylthiazol-5(2H)-ylidene]ethyl phosphate binding site; the sequence is TST. K138 is a binding site for 4-amino-2-methyl-5-(diphosphooxymethyl)pyrimidine. 2-[(2R,5Z)-2-carboxy-4-methylthiazol-5(2H)-ylidene]ethyl phosphate is bound by residues G165 and 185–186; that span reads IS.

Belongs to the thiamine-phosphate synthase family. Mg(2+) serves as cofactor.

It carries out the reaction 2-[(2R,5Z)-2-carboxy-4-methylthiazol-5(2H)-ylidene]ethyl phosphate + 4-amino-2-methyl-5-(diphosphooxymethyl)pyrimidine + 2 H(+) = thiamine phosphate + CO2 + diphosphate. The catalysed reaction is 2-(2-carboxy-4-methylthiazol-5-yl)ethyl phosphate + 4-amino-2-methyl-5-(diphosphooxymethyl)pyrimidine + 2 H(+) = thiamine phosphate + CO2 + diphosphate. The enzyme catalyses 4-methyl-5-(2-phosphooxyethyl)-thiazole + 4-amino-2-methyl-5-(diphosphooxymethyl)pyrimidine + H(+) = thiamine phosphate + diphosphate. It functions in the pathway cofactor biosynthesis; thiamine diphosphate biosynthesis; thiamine phosphate from 4-amino-2-methyl-5-diphosphomethylpyrimidine and 4-methyl-5-(2-phosphoethyl)-thiazole: step 1/1. In terms of biological role, condenses 4-methyl-5-(beta-hydroxyethyl)thiazole monophosphate (THZ-P) and 2-methyl-4-amino-5-hydroxymethyl pyrimidine pyrophosphate (HMP-PP) to form thiamine monophosphate (TMP). The sequence is that of Thiamine-phosphate synthase from Clostridium acetobutylicum (strain ATCC 824 / DSM 792 / JCM 1419 / IAM 19013 / LMG 5710 / NBRC 13948 / NRRL B-527 / VKM B-1787 / 2291 / W).